A 99-amino-acid chain; its full sequence is Large ribosomal subunit protein bL25 (99 aa).

The protein belongs to the bacterial ribosomal protein bL25 family. In terms of assembly, part of the 50S ribosomal subunit; part of the 5S rRNA/L5/L18/L25 subcomplex. Contacts the 5S rRNA. Binds to the 5S rRNA independently of L5 and L18.

In terms of biological role, this is one of the proteins that binds to the 5S RNA in the ribosome where it forms part of the central protuberance. This Nostoc sp. (strain PCC 7120 / SAG 25.82 / UTEX 2576) protein is Large ribosomal subunit protein bL25.